The following is a 762-amino-acid chain: Xaa-Pro dipeptidyl-peptidase (762 aa).

Catalysis depends on charge relay system residues Ser-349, Asp-469, and His-499.

This sequence belongs to the peptidase S15 family. Homodimer.

The protein resides in the cytoplasm. The enzyme catalyses Hydrolyzes Xaa-Pro-|- bonds to release unblocked, N-terminal dipeptides from substrates including Ala-Pro-|-p-nitroanilide and (sequentially) Tyr-Pro-|-Phe-Pro-|-Gly-Pro-|-Ile.. Its function is as follows. Removes N-terminal dipeptides sequentially from polypeptides having unsubstituted N-termini provided that the penultimate residue is proline. The chain is Xaa-Pro dipeptidyl-peptidase from Streptococcus sanguinis (strain SK36).